A 95-amino-acid polypeptide reads, in one-letter code: Large ribosomal subunit protein bL25 (95 aa).

The protein belongs to the bacterial ribosomal protein bL25 family. Part of the 50S ribosomal subunit; part of the 5S rRNA/L5/L18/L25 subcomplex. Contacts the 5S rRNA. Binds to the 5S rRNA independently of L5 and L18.

Functionally, this is one of the proteins that binds to the 5S RNA in the ribosome where it forms part of the central protuberance. The chain is Large ribosomal subunit protein bL25 from Chromobacterium violaceum (strain ATCC 12472 / DSM 30191 / JCM 1249 / CCUG 213 / NBRC 12614 / NCIMB 9131 / NCTC 9757 / MK).